The chain runs to 337 residues: Cytoskeleton protein RodZ (337 aa).

Topologically, residues 1–111 (MNTEATHDQN…LGKRRKKRDG (111 aa)) are cytoplasmic. Residues 19-71 (LRNAREQLGLSQQAVAERLCLKVSTVRDIEEDKAPADLASTFLRGYIRSYARL) form the HTH cro/C1-type domain. The H-T-H motif DNA-binding region spans 30–49 (QQAVAERLCLKVSTVRDIEE). A helical; Signal-anchor for type II membrane protein membrane pass occupies residues 112–132 (WLMTFTWLVLFVVIGLSGAWW). At 133–337 (WQDHKAQQEE…TLNAEQSPAQ (205 aa)) the chain is on the periplasmic side. The segment covering 145 to 167 (TMADQSSAELSSNSEQGQSVPLN) has biased composition (polar residues). Positions 145–220 (TMADQSSAEL…VSPSQANVDT (76 aa)) are disordered. Residues 168-207 (TSTTTDPATTSTPPASVDTTATNTQTPAVTAPAPAVDPQQ) are compositionally biased toward low complexity. The segment covering 208–218 (NAVVSPSQANV) has biased composition (polar residues).

Belongs to the RodZ family.

It is found in the cell inner membrane. Cytoskeletal protein that is involved in cell-shape control through regulation of the length of the long axis. This Escherichia coli O17:K52:H18 (strain UMN026 / ExPEC) protein is Cytoskeleton protein RodZ.